The following is a 55-amino-acid chain: MAKAAMLKIKLLSTADTGYFYVTKKNARTKTEKLSFKKYDPVVRKHVEFKETKIK.

The protein belongs to the bacterial ribosomal protein bL33 family.

The sequence is that of Large ribosomal subunit protein bL33 from Methylocella silvestris (strain DSM 15510 / CIP 108128 / LMG 27833 / NCIMB 13906 / BL2).